We begin with the raw amino-acid sequence, 536 residues long: ATP synthase subunit beta (536 aa).

Positions 1–57 are disordered; the sequence is MVKAVSSSKGAAKVEQKKSAARSGVKKNASKSQASLQDTSSPLKTSSKNAHAKKDVQ. A compositionally biased stretch (polar residues) spans 30–49; the sequence is SKSQASLQDTSSPLKTSSKN. 208–215 is a binding site for ATP; it reads GGAGVGKT.

The protein belongs to the ATPase alpha/beta chains family. As to quaternary structure, F-type ATPases have 2 components, CF(1) - the catalytic core - and CF(0) - the membrane proton channel. CF(1) has five subunits: alpha(3), beta(3), gamma(1), delta(1), epsilon(1). CF(0) has three main subunits: a(1), b(2) and c(9-12). The alpha and beta chains form an alternating ring which encloses part of the gamma chain. CF(1) is attached to CF(0) by a central stalk formed by the gamma and epsilon chains, while a peripheral stalk is formed by the delta and b chains.

It localises to the cell inner membrane. The catalysed reaction is ATP + H2O + 4 H(+)(in) = ADP + phosphate + 5 H(+)(out). Produces ATP from ADP in the presence of a proton gradient across the membrane. The catalytic sites are hosted primarily by the beta subunits. In Bartonella quintana (strain Toulouse) (Rochalimaea quintana), this protein is ATP synthase subunit beta.